We begin with the raw amino-acid sequence, 411 residues long: Ornithine aminotransferase (411 aa).

An N6-(pyridoxal phosphate)lysine modification is found at lysine 257.

The protein belongs to the class-III pyridoxal-phosphate-dependent aminotransferase family. OAT subfamily. The cofactor is pyridoxal 5'-phosphate.

It is found in the cytoplasm. The enzyme catalyses a 2-oxocarboxylate + L-ornithine = L-glutamate 5-semialdehyde + an L-alpha-amino acid. Its pathway is amino-acid biosynthesis; L-proline biosynthesis; L-glutamate 5-semialdehyde from L-ornithine: step 1/1. Its function is as follows. Catalyzes the interconversion of ornithine to glutamate semialdehyde. The protein is Ornithine aminotransferase of Bordetella bronchiseptica (strain ATCC BAA-588 / NCTC 13252 / RB50) (Alcaligenes bronchisepticus).